Consider the following 253-residue polypeptide: MLSKKFGLSMIVLGIMSSSAFADSIVEGRTLNVAVSPASPPMLFKSADGKLQGIDLELFSSYCQSRHCKLNITEYAWDGMLGAVASGQADVAFSGISITDKRKKVIDFSEPYYINSFYLVSMANHKITLNNLNELNKYSIGYPRGMAYSDLIKNDLEPKGYYSLSKVKLYPTYNETMADLKNGNLDLAFIEEPVYFTFKNKKKMPIESRYVFKNVDQLGIAFKKGSPVRDDFNLWLKEQGPQKISGIVDSWMK.

Residues 1-22 (MLSKKFGLSMIVLGIMSSSAFA) form the signal peptide. D-alanine contacts are provided by G95, S97, R102, A147, and E191.

Belongs to the bacterial solute-binding protein 3 family. In terms of assembly, monomer.

The protein resides in the periplasm. In terms of biological role, part of the ABC transporter complex dalSTUV, that imports D-alanine into the cytoplasm. Helps protect the organism from oxidative killing by host neutrophils through sequestration of D-alanine, a substrate that is converted to hydrogen peroxide by the host enzyme DAO (D-amino acid oxidase). DalS shuttles D-alanine from the periplasm to the DalTUV complex situated in the inner membrane and through hydrolysis of ATP, D-alanine is transported across the membrane into the cytoplasm. Not required for the metabolism of D-alanine found in the stem peptide of peptidoglycan. The protein is ABC transporter D-alanine-binding periplasmic protein of Salmonella typhimurium (strain LT2 / SGSC1412 / ATCC 700720).